A 385-amino-acid chain; its full sequence is Period circadian protein (385 aa).

3 disordered regions span residues 28-121, 169-189, and 322-351; these read TAPV…VPPV, GPGP…WEGE, and SPAS…TSQG. The segment covering 71-93 has biased composition (low complexity); sequence SGNFTTGSNLHMSSVTNTSNAGT. Over residues 94-115 the composition is skewed to gly residues; that stretch reads GTSGTGNSGDGGGGGAGDGPGS. The span at 340–351 shows a compositional bias: polar residues; it reads HPSSEQPSTSQG.

As to quaternary structure, forms a heterodimer with timeless (TIM); the complex then translocates into the nucleus. Phosphorylated with a circadian rhythmicity, probably by the double-time protein (dbt). Phosphorylation could be implicated in the stability of per monomer and in the formation of heterodimer per-tim.

It localises to the nucleus. The protein resides in the cytoplasm. The protein localises to the perinuclear region. In terms of biological role, essential for biological clock functions. Determines the period length of circadian and ultradian rhythms; an increase in PER dosage leads to shortened circadian rhythms and a decrease leads to lengthened circadian rhythms. Essential for the circadian rhythmicity of locomotor activity, eclosion behavior, and for the rhythmic component of the male courtship song that originates in the thoracic nervous system. The biological cycle depends on the rhythmic formation and nuclear localization of the TIM-PER complex. Light induces the degradation of TIM, which promotes elimination of PER. Nuclear activity of the heterodimer coordinatively regulates PER and TIM transcription through a negative feedback loop. Behaves as a negative element in circadian transcriptional loop. Does not appear to bind DNA, suggesting indirect transcriptional inhibition. This Drosophila nebulosa (Fruit fly) protein is Period circadian protein (per).